The primary structure comprises 259 residues: 3-deoxy-manno-octulosonate cytidylyltransferase 1 (259 aa).

The protein belongs to the KdsB family.

It is found in the cytoplasm. The catalysed reaction is 3-deoxy-alpha-D-manno-oct-2-ulosonate + CTP = CMP-3-deoxy-beta-D-manno-octulosonate + diphosphate. The protein operates within nucleotide-sugar biosynthesis; CMP-3-deoxy-D-manno-octulosonate biosynthesis; CMP-3-deoxy-D-manno-octulosonate from 3-deoxy-D-manno-octulosonate and CTP: step 1/1. Its pathway is bacterial outer membrane biogenesis; lipopolysaccharide biosynthesis. Functionally, activates KDO (a required 8-carbon sugar) for incorporation into bacterial lipopolysaccharide in Gram-negative bacteria. This is 3-deoxy-manno-octulosonate cytidylyltransferase 1 from Hydrogenovibrio crunogenus (strain DSM 25203 / XCL-2) (Thiomicrospira crunogena).